Here is a 199-residue protein sequence, read N- to C-terminus: Protein Thf1 (199 aa).

The stretch at 167–198 forms a coiled coil; that stretch reads QYSRVEKDISMYKSNIEKMKQALEIIALNLKT.

Belongs to the THF1 family.

May be involved in photosynthetic membrane biogenesis. This is Protein Thf1 from Prochlorococcus marinus (strain NATL1A).